The chain runs to 156 residues: Ribonuclease pancreatic (156 aa).

The N-terminal stretch at 1 to 28 is a signal peptide; that stretch reads MALEKSLVLLPLFVLMLLVLGWVQPSLG. Substrate contacts are provided by Lys-35 and Arg-38. Catalysis depends on His-40, which acts as the Proton acceptor. 2 N-linked (GlcNAc...) asparagine glycosylation sites follow: Asn-50 and Asn-62. 4 disulfide bridges follow: Cys-54/Cys-112, Cys-68/Cys-123, Cys-86/Cys-138, and Cys-93/Cys-100. Substrate-binding positions include 69 to 73 and Lys-94; that span reads KPVNT. Residue Asn-104 is glycosylated (N-linked (GlcNAc...) asparagine). Substrate is bound at residue Arg-113. A glycan (N-linked (GlcNAc...) asparagine) is linked at Asn-116. The Proton donor role is filled by His-147.

It belongs to the pancreatic ribonuclease family. Monomer. Interacts with and forms tight 1:1 complexes with RNH1. Dimerization of two such complexes may occur. Interaction with RNH1 inhibits this protein.

The protein resides in the secreted. The enzyme catalyses an [RNA] containing cytidine + H2O = an [RNA]-3'-cytidine-3'-phosphate + a 5'-hydroxy-ribonucleotide-3'-[RNA].. It catalyses the reaction an [RNA] containing uridine + H2O = an [RNA]-3'-uridine-3'-phosphate + a 5'-hydroxy-ribonucleotide-3'-[RNA].. Endonuclease that catalyzes the cleavage of RNA on the 3' side of pyrimidine nucleotides. Acts on single-stranded and double-stranded RNA. The protein is Ribonuclease pancreatic (RNASE1) of Nomascus leucogenys (Northern white-cheeked gibbon).